A 521-amino-acid polypeptide reads, in one-letter code: Bifunctional purine biosynthesis protein PurH (521 aa).

The 145-residue stretch at 1–145 (MIKQALISVS…KNHRDVTVVV (145 aa)) folds into the MGS-like domain.

The protein belongs to the PurH family.

The catalysed reaction is (6R)-10-formyltetrahydrofolate + 5-amino-1-(5-phospho-beta-D-ribosyl)imidazole-4-carboxamide = 5-formamido-1-(5-phospho-D-ribosyl)imidazole-4-carboxamide + (6S)-5,6,7,8-tetrahydrofolate. It carries out the reaction IMP + H2O = 5-formamido-1-(5-phospho-D-ribosyl)imidazole-4-carboxamide. Its pathway is purine metabolism; IMP biosynthesis via de novo pathway; 5-formamido-1-(5-phospho-D-ribosyl)imidazole-4-carboxamide from 5-amino-1-(5-phospho-D-ribosyl)imidazole-4-carboxamide (10-formyl THF route): step 1/1. It participates in purine metabolism; IMP biosynthesis via de novo pathway; IMP from 5-formamido-1-(5-phospho-D-ribosyl)imidazole-4-carboxamide: step 1/1. The sequence is that of Bifunctional purine biosynthesis protein PurH from Burkholderia ambifaria (strain MC40-6).